The chain runs to 151 residues: NADPH-dependent 7-cyano-7-deazaguanine reductase (151 aa).

Residue C51 is the Thioimide intermediate of the active site. D58 (proton donor) is an active-site residue. Substrate contacts are provided by residues 73–75 (VES) and 92–93 (HE).

The protein belongs to the GTP cyclohydrolase I family. QueF type 1 subfamily.

Its subcellular location is the cytoplasm. The enzyme catalyses 7-aminomethyl-7-carbaguanine + 2 NADP(+) = 7-cyano-7-deazaguanine + 2 NADPH + 3 H(+). It functions in the pathway tRNA modification; tRNA-queuosine biosynthesis. In terms of biological role, catalyzes the NADPH-dependent reduction of 7-cyano-7-deazaguanine (preQ0) to 7-aminomethyl-7-deazaguanine (preQ1). The polypeptide is NADPH-dependent 7-cyano-7-deazaguanine reductase (Bacteroides fragilis (strain YCH46)).